A 100-amino-acid polypeptide reads, in one-letter code: NADH-quinone oxidoreductase subunit K (100 aa).

Helical transmembrane passes span 4 to 24, 29 to 49, and 60 to 80; these read TSYYILLSALLFTLGVAGVLI, LVLFMSVELMLNSANLALVTF, and IVVFFVIVVAAAEVAVGLALL.

The protein belongs to the complex I subunit 4L family. NDH-1 is composed of 14 different subunits. Subunits NuoA, H, J, K, L, M, N constitute the membrane sector of the complex.

The protein localises to the cell membrane. The catalysed reaction is a quinone + NADH + 5 H(+)(in) = a quinol + NAD(+) + 4 H(+)(out). Its function is as follows. NDH-1 shuttles electrons from NADH, via FMN and iron-sulfur (Fe-S) centers, to quinones in the respiratory chain. The immediate electron acceptor for the enzyme in this species is believed to be ubiquinone. Couples the redox reaction to proton translocation (for every two electrons transferred, four hydrogen ions are translocated across the cytoplasmic membrane), and thus conserves the redox energy in a proton gradient. In Roseiflexus sp. (strain RS-1), this protein is NADH-quinone oxidoreductase subunit K.